The primary structure comprises 956 residues: MDKEKIVIQGARAHNLKNIDVEIPRDKLVVMTGLSGSGKSSLAFDTIYAEGQRRYVESLSAYARQFLGQMDKPDVDLIEGLSPAISIDQKTTSRNPRSTVGTVTEIHDYLRLLYARVGHPVCPNHGIEITSQTIEQMVDRVLEYPEKTRIQIMAPIVSGKKGTHKKTIEEIKKEGYVRIRVDGEIYDINDEIEIEKNKKHSIEIIIDRIVIKEGINTRLYDSIEAALRLADGYAVVDIMGDKELLFSEHYACPYCGFSVGELEPRMFSFNSPFGACPTCDGLGTKLEVDVDTVIPDRSLSLNEGAIIPWRPISSQYYPQMLASACKEFGIDMDTPLEKLTKEELDIILNGSKDKEFYFEYKNDFGMTRETWIPFEGILPNIERRYRETNSDFTRDQMAQYMTDLPCPSCKGYRLKEETLSVKVNNHHIGQISEFSINEALDFFDGLELSEKETQIAAPIFKEVRARLGFLKNVGLDYLTMSRAAGTLSGGEAQRIRLATQIGSRLTGVLYILDEPSIGLHQRDNDRLISTLQSMRDIGNTLIVVEHDEDTMMAADYLIDIGPGAGEHGGRIVAAGTPEEVAKNKNSITGDYLSGKKFIPVPAKRRKGNGLELEIIGAKANNLKNVNAKIPLATFSCVTGVSGSGKSSLVNEVLRKALARKLNRNHAKPGEHKEIKGIENLEKIINIDQSPIGRTPRSNPATYTGAFDDIRDLFASTNEAKVRGYKKGRFSFNVKGGRCEACKGDGIIKIEMHFLPDVYVPCEVCHGKRYNGETLDIRYKGKNIAEVLEMTVEEGLEYFTNQPRIARKLQTIVDVGLGYIRLGQPATTLSGGEAQRVKLASELHKRSNGKSFYILDEPTTGLHADDIGRLLKVLQRLVEENGDTVLVIEHNLDVIKQADYLIDLGPEGGDGGGQIIATGTPEKIARSKKSYTGKYLKPILERDKERTEERIATAKKK.

Position 33–40 (33–40 (GLSGSGKS)) interacts with ATP. A C4-type zinc finger spans residues 252–279 (CPYCGFSVGELEPRMFSFNSPFGACPTC). 2 consecutive ABC transporter domains span residues 309-587 (WRPI…KNSI) and 607-936 (GNGL…KYLK). ATP is bound at residue 639–646 (GVSGSGKS). A C4-type zinc finger spans residues 738–764 (CEACKGDGIIKIEMHFLPDVYVPCEVC).

Belongs to the ABC transporter superfamily. UvrA family. In terms of assembly, forms a heterotetramer with UvrB during the search for lesions.

The protein resides in the cytoplasm. Functionally, the UvrABC repair system catalyzes the recognition and processing of DNA lesions. UvrA is an ATPase and a DNA-binding protein. A damage recognition complex composed of 2 UvrA and 2 UvrB subunits scans DNA for abnormalities. When the presence of a lesion has been verified by UvrB, the UvrA molecules dissociate. This chain is UvrABC system protein A, found in Listeria monocytogenes serotype 4b (strain F2365).